Reading from the N-terminus, the 321-residue chain is Glutaminase (321 aa).

The substrate site is built by Ser69, Asn120, Glu165, Asn172, Tyr196, Tyr248, and Val266.

This sequence belongs to the glutaminase family. Homotetramer.

The enzyme catalyses L-glutamine + H2O = L-glutamate + NH4(+). The chain is Glutaminase from Bacteroides thetaiotaomicron (strain ATCC 29148 / DSM 2079 / JCM 5827 / CCUG 10774 / NCTC 10582 / VPI-5482 / E50).